Here is a 906-residue protein sequence, read N- to C-terminus: Protein translocase subunit SecA (906 aa).

ATP contacts are provided by residues glutamine 87, 105–109, and aspartate 521; that span reads GEGKT. Residues 849–865 are compositionally biased toward low complexity; the sequence is STATAAEPAPEASQSQS. Positions 849–897 are disordered; the sequence is STATAAEPAPEASQSQSTNDATASQNPPITEVEASKVGRNQPCPCGSGK. Positions 866-876 are enriched in polar residues; the sequence is TNDATASQNPP. Zn(2+) is bound by residues cysteine 891, cysteine 893, cysteine 902, and cysteine 903.

This sequence belongs to the SecA family. Monomer and homodimer. Part of the essential Sec protein translocation apparatus which comprises SecA, SecYEG and auxiliary proteins SecDF-YajC and YidC. Zn(2+) is required as a cofactor.

It is found in the cell inner membrane. The protein localises to the cytoplasm. It carries out the reaction ATP + H2O + cellular proteinSide 1 = ADP + phosphate + cellular proteinSide 2.. Functionally, part of the Sec protein translocase complex. Interacts with the SecYEG preprotein conducting channel. Has a central role in coupling the hydrolysis of ATP to the transfer of proteins into and across the cell membrane, serving both as a receptor for the preprotein-SecB complex and as an ATP-driven molecular motor driving the stepwise translocation of polypeptide chains across the membrane. This chain is Protein translocase subunit SecA, found in Dichelobacter nodosus (strain VCS1703A).